The sequence spans 2144 residues: MTSRQNTNTPMPLAIIGMSCRFPGKVASLEDFWDMLSNSKHGYRQFPRERFNWEAFYHPNQSRKDCIDVNCGYFLDGDIAEFDAQFFKMNGTDAASFDPQGRMILECVYEALENAGVPKESIVGSKVGVFSTSNTSDYTLSLKDDIYSMPALVGVLGHACMLSNIVSNTFDLKGPSVSIDTACSSAFYALQLASQSLRSGETEMCIVSGCALNISPWRWTMLSNLTMLNPDGLSKSFDPQADAGYVRGEGAASIIVKPLDAAIRDNDRVHCVLSDIGVNHNGRTNGYTLPDARMQASLMRELQVRLDIKPDEFGFVEAHAPGTRVGDPIEISALQEVFSTSARTLEDPLLIGSVKANVGHLESSSGFPSLIKAAMMLKKGLVVPNANFENESMNSHLKEKNMRVPISTQPWPKGKTYIAINNYGFGGSNSHCIVRAPPIPQGLVSQKETRNVESDYLFVLSANDEVALRRTREQLVEFLESVDASSTTMQNTAYTLGQRRSLLSWRATVVASNIDDLIIQAASPQVIPRRVTRQPTLVFAFTGQGAQYFGVGRELLQYPVFSTTLKMASACAESFGANFSLQDELYGNEATSRINDADVSQPASTAIQIALVDLLRSWGIQPSAVVGHSSGEVAAAYAAGLLSLPGAMRIAYARGQMAIRIKKVQPDFKGGMLAVAAGPADVLPLLDIVTSGKVVIACENSPKSVTVSGDEAGLVELESLLEEDGLPHRRLAVDFPYHSTFLDPFIDDYEEAICTDDTFSNLQPTAEYFSAMAGRKVEPVTVQKPSYWASSAKFRVRFTSAAKALLRSKPSPNVVVEIGPNPTLVGSLKSILSEIKKEIPHPIEVVPSLHRGQNARTAMLKLGASLVSFGQRIDMEQVNFASGHISGQPPTLVDGIKPYPWTRSHHWIKSRVRDDDLHRPFPHHDLLGSINSSWGSKELVWKNNLDVENVPWLRDYQVASSITYPLAGYVCAAIEASKQFAMTRNLFLDRAFKGFTVRDMIIDESLVMKEGIPVELVTKLRSLPGTNFEEFEVLSWDEGQRAWKRCCRALVKCEATTDGVEQVEEMKWAESRAACHSCVGSPLLYQRLSKVGPRRTGKFRNVVDLRYGAGKTTAEVVVSDTKASMPQHYESDMTVHPTTIDGLFQCGSCIPFLDESSSVVGGSSNIWVPRSIKEFTIQTRPGEALKPEMVFRTVARVDKNERHDRSYSIDGTTDNAPICQIRIRGLKLAVEATLAPQWPAPHYGCYKIAWQNATELRSQAAQWHVLQGPGDVKNLAGSVSKKIGGTVRPLCEGVPSEASFCVVVDVGEGLLASVERESFNHIKQALTTCEGVLWVTCGAFGVSYDSTHPNAGMVTGLLRTIRSEMRASVASLDLDANASSDIEAQAALVKRVADHLAAAAQNADVQAEMEFTEKQGQLMVSRVVHDTQLDNVVHAVTGVIAPRTEPFDPEVRGFFTLQRPGMPDSLYLQRTDVPDPLDESEVEVRIAAIALDADDIHGLQGRALSGTVVRCGSTVTRVQPGDRVFGLANIDGAVRTFARAPETCLARTPANIPIDAAAALPATLGAAYHALVDLGRLVAGESVLIVAVGSALGQAAIQVALAKGALVFALAHSQEERDAAIVAGASIDRVVTTLVGLPPIQILFNPVSDANANLSMLGALAPLGRIVQVGEPSHQYPALAVGHSFSIAHLDAVADALPAQMAAILDAVVGLVDSKFVHSPPVRTVGLEYLSEALSNISETDSKKLLLVPGKNEMVKATPSCPAPPTFDPAAVYLLVGGSGGLGRVIAKWMLNNGARKIGLLSRSTSMSPDVRTLVDDAAGIGAEVFLLPCDVTSQHHLQRVIDQCVIEKGQIKGVINAAMVFKGGVFTSVSFDDFTSVVQPKVCGTWNLHHALREATLDFFILISSVAGIMGTPGHSAYASANTFLDSFAMYRMQQGLPATSLALTAVVDAGYMAENASKLQKLKYVSEFEGEILLTADVLALLGAAVTGSIASSCKGFSIIGAGFGTALKLPSYAQDPRFSTLTSNHSQDRKSKPRTTTAANTDTLVYAVDQADTKEEATQLLLAAIRDKIAQLQLIPVSDIVDDQTITELGLDSLTVMELYSWVGRLFRLRFGIQEYARLDTLEKIVDSVIVKREAAKVEAP.

Residues 10-436 (PMPLAIIGMS…GSNSHCIVRA (427 aa)) form the Ketosynthase family 3 (KS3) domain. Catalysis depends on for beta-ketoacyl synthase activity residues Cys-183, His-319, and His-360. Residues 538-855 (VFAFTGQGAQ…VPSLHRGQNA (318 aa)) are malonyl-CoA:ACP transacylase (MAT). The interval 924-1058 (HDLLGSINSS…ALVKCEATTD (135 aa)) is N-terminal hotdog fold. Positions 924–1214 (HDLLGSINSS…RSYSIDGTTD (291 aa)) are dehydratase (DH) domain. The region spanning 924-1237 (HDLLGSINSS…LAVEATLAPQ (314 aa)) is the PKS/mFAS DH domain. The tract at residues 1076–1237 (HSCVGSPLLY…LAVEATLAPQ (162 aa)) is C-terminal hotdog fold. The tract at residues 1461-1747 (GMPDSLYLQR…SETDSKKLLL (287 aa)) is enoyl reductase (ER) domain. The segment at 1771 to 1948 (AVYLLVGGSG…PATSLALTAV (178 aa)) is ketoreductase (KR) domain. One can recognise a Carrier domain in the interval 2059–2136 (EATQLLLAAI…KIVDSVIVKR (78 aa)). Ser-2096 bears the O-(pantetheine 4'-phosphoryl)serine mark.

It functions in the pathway mycotoxin biosynthesis. Functionally, reducing polyketide synthase (PKS); part of the Tox1A locus, one of the 2 loci that mediate the biosynthesis of T-toxin, a family of linear polyketides 37 to 45 carbons in length, of which the major component is 41 carbons, and which leads to high virulence to maize. One of the PKSs (PKS1 or PKS2) could synthesize a precursor, used subsequently by the other PKS as starter unit, to add additional carbons. Variability in the length of the final carbon backbone C35-47 could be achieved by varying the number of condensation cycles, or use of different starter or extender units or might be due to decarboxylation of the penultimate product, catalyzed by DEC1. Additional proteins are required for the biosynthesis of T-toxin, including oxidoreductases RED1, RED2, RED3, LAM1 and OXI1, as well as esterase TOX9. The chain is Reducing polyketide synthase PKS2 from Cochliobolus heterostrophus (strain C4 / ATCC 48331 / race T) (Southern corn leaf blight fungus).